A 374-amino-acid polypeptide reads, in one-letter code: Fasciclin-like arabinogalactan protein CTB11 (374 aa).

An N-terminal signal peptide occupies residues 1-18 (MHFPALAVAGCLLSRATA). FAS1 domains are found at residues 19–171 (QSLD…DANM) and 173–302 (LPHN…DGAL). N52, N72, N120, N132, and N176 each carry an N-linked (GlcNAc...) asparagine glycan. A helical transmembrane segment spans residues 328–348 (ILASHQLTLLAVLAMALVSIL).

The protein belongs to the fasciclin-like AGP family.

Its subcellular location is the membrane. Its pathway is mycotoxin biosynthesis. Its function is as follows. Fasciclin-like arabinogalactan protein; part of the gene cluster that mediates the biosynthesis of cercosporin, a light-activated, non-host-selective toxin. The perylenequinone chromophore of cercosporin absorbs light energy to attain an electronically-activated triplet state and produces active oxygen species such as the hydroxyl radical, superoxide, hydrogen peroxide or singlet oxygen upon reaction with oxygen molecules. These reactive oxygen species cause damage to various cellular components including lipids, proteins and nucleic acids. The first step of cercosporin biosynthesis is performed by the polyketide synthase CTB1 which catalyzes the formation of nor-toralactone. The starter unit acyltransferase (SAT) domain of CTB1 initiates polyketide extension by the selective utilization of acetyl-CoA, which is elongated to the heptaketide in the beta-ketoacyl synthase (KS) domain by successive condensations with six malonyl units introduced by the malonyl acyltransferase (MAT) domain. The product template (PT) domain catalyzes C4-C9 and C2-C11 aldol cyclizations and dehydrations to a trihydroxynaphthalene, which is thought to be delivered to the thioesterase (TE) domain for product release. The bifunctional enzyme CTB3 then methylates nor-toralactone to toralactone before conducting an unusual oxidative aromatic ring opening. The O-methyltransferase CTB2 further methylates the nascent OH-6 of the CBT3 product, blocking further oxidation at this site before the reductase CTB6 reduces the 2-oxopropyl ketone at position C7, giving naphthalene. The FAD-dependent monooxygenase CTB5 in concert with the multicopper oxidase CTB12 are responsible for homodimerization of naphthalene with CTB7 installing the dioxepine moiety, finally producing cercosporin. The fasciclin domain-containing protein CTB11 might act with CTB5 and CTB12 whereas the roles of CTB9 and CTB10 have still to be elucidated. The protein is Fasciclin-like arabinogalactan protein CTB11 of Cercospora beticola (Sugarbeet leaf spot fungus).